Reading from the N-terminus, the 267-residue chain is Cell cycle checkpoint protein RAD1 homolog mrt-2 (267 aa).

Belongs to the Rad1 family. In terms of assembly, probable component of the toroidal 9-1-1 (RAD9-RAD1-HUS1) complex, composed of hpr-9, mrt-2 and hus-1. Interacts with hus-1. Might associate with hpr-9.

Its subcellular location is the nucleus. The enzyme catalyses Exonucleolytic cleavage in the 3'- to 5'-direction to yield nucleoside 5'-phosphates.. Its function is as follows. May be a component of the 9-1-1 cell-cycle checkpoint response complex that plays a major role in DNA repair. Promotes DNA double strand break-induced cell cycle arrest and apoptosis, thereby playing a role in genome stability. Also required for telomere length maintenance and germline immortality. May possess 3'-&gt;5' double stranded DNA exonuclease activity. This chain is Cell cycle checkpoint protein RAD1 homolog mrt-2, found in Caenorhabditis elegans.